The chain runs to 345 residues: PI-PLC X domain-containing protein 1 (345 aa).

The region spanning 52-228 (QLWDVPLHHL…QVIVSYEDEA (177 aa)) is the PI-PLC X-box domain.

As to expression, expressed at highest levels in brain and kidney. Also detected in stomach, thymus and skeletal muscle.

It is found in the cytoplasm. This chain is PI-PLC X domain-containing protein 1 (Plcxd1), found in Mus musculus (Mouse).